Here is a 671-residue protein sequence, read N- to C-terminus: DNA ligase (671 aa).

Residues 32 to 36 (DAEYD), 81 to 82 (SL), and Glu113 each bind NAD(+). The active-site N6-AMP-lysine intermediate is the Lys115. The NAD(+) site is built by Arg136, Glu173, Lys290, and Lys314. Cys408, Cys411, Cys426, and Cys432 together coordinate Zn(2+). In terms of domain architecture, BRCT spans 593–671 (EIDSPFAGKT…ETEMLRLLGS (79 aa)).

This sequence belongs to the NAD-dependent DNA ligase family. LigA subfamily. Mg(2+) serves as cofactor. It depends on Mn(2+) as a cofactor.

It carries out the reaction NAD(+) + (deoxyribonucleotide)n-3'-hydroxyl + 5'-phospho-(deoxyribonucleotide)m = (deoxyribonucleotide)n+m + AMP + beta-nicotinamide D-nucleotide.. In terms of biological role, DNA ligase that catalyzes the formation of phosphodiester linkages between 5'-phosphoryl and 3'-hydroxyl groups in double-stranded DNA using NAD as a coenzyme and as the energy source for the reaction. It is essential for DNA replication and repair of damaged DNA. In Escherichia coli O6:H1 (strain CFT073 / ATCC 700928 / UPEC), this protein is DNA ligase.